A 151-amino-acid polypeptide reads, in one-letter code: 3-dehydroquinate dehydratase (151 aa).

Catalysis depends on Tyr24, which acts as the Proton acceptor. Substrate-binding residues include Asn76, His82, and Asp89. His102 functions as the Proton donor in the catalytic mechanism. Substrate-binding positions include Leu103 to Ser104 and Arg113.

Belongs to the type-II 3-dehydroquinase family. Homododecamer.

It carries out the reaction 3-dehydroquinate = 3-dehydroshikimate + H2O. The protein operates within metabolic intermediate biosynthesis; chorismate biosynthesis; chorismate from D-erythrose 4-phosphate and phosphoenolpyruvate: step 3/7. In terms of biological role, catalyzes a trans-dehydration via an enolate intermediate. The chain is 3-dehydroquinate dehydratase from Acinetobacter baumannii (strain ATCC 17978 / DSM 105126 / CIP 53.77 / LMG 1025 / NCDC KC755 / 5377).